A 65-amino-acid polypeptide reads, in one-letter code: Alpha-toxin Bot1 (65 aa).

Residues 2-64 (RDAYIAQPEN…VPIRIPGKCH (63 aa)) enclose the LCN-type CS-alpha/beta domain. Cystine bridges form between C12-C63, C16-C36, C22-C46, and C26-C48. Residue F65 is modified to Phenylalanine amide.

This sequence belongs to the long (4 C-C) scorpion toxin superfamily. Sodium channel inhibitor family. Alpha subfamily. As to expression, expressed by the venom gland.

Its subcellular location is the secreted. Its function is as follows. Alpha toxins bind voltage-independently at site-3 of sodium channels (Nav) and inhibit the inactivation of the activated channels, thereby blocking neuronal transmission. The protein is Alpha-toxin Bot1 of Buthus occitanus tunetanus (Common European scorpion).